Here is a 95-residue protein sequence, read N- to C-terminus: Small ribosomal subunit protein uS14 (95 aa).

This sequence belongs to the universal ribosomal protein uS14 family. Part of the 30S ribosomal subunit. Contacts proteins S3 and S10.

Binds 16S rRNA, required for the assembly of 30S particles and may also be responsible for determining the conformation of the 16S rRNA at the A site. This is Small ribosomal subunit protein uS14 (rpsN) from Carsonella ruddii.